The primary structure comprises 99 residues: Integration host factor subunit alpha (99 aa).

The protein belongs to the bacterial histone-like protein family. As to quaternary structure, heterodimer of an alpha and a beta chain.

Functionally, this protein is one of the two subunits of integration host factor, a specific DNA-binding protein that functions in genetic recombination as well as in transcriptional and translational control. This is Integration host factor subunit alpha from Anaeromyxobacter sp. (strain Fw109-5).